A 414-amino-acid polypeptide reads, in one-letter code: Cytochrome c-554 (414 aa).

A signal peptide spans 1 to 24 (MQSSRPSDRQLAIVVSVAVGIVVA). Heme is bound by residues Met110, Cys131, Cys134, His135, Met154, Cys179, Cys182, His183, Met283, Cys294, Cys297, His298, Cys378, Cys381, and His382.

In terms of processing, binds 4 heme groups per subunit. Post-translationally, the N-terminus is blocked.

It is found in the periplasm. Serves as the immediate electron donor to the oxidized BChl2 (bacteriochlorophyll dimer) that is oxidized in the first step of light-induced charge separation. Can also oxidize low-potential substrates. The sequence is that of Cytochrome c-554 (puf2C) from Chloroflexus aurantiacus (strain ATCC 29366 / DSM 635 / J-10-fl).